The primary structure comprises 434 residues: Pectate lyase (434 aa).

Residues 1 to 22 (MKAAQFFLYSLLFFASAALSSA) form the signal peptide. N-linked (GlcNAc...) asparagine glycans are attached at residues asparagine 68 and asparagine 97. Ca(2+) contacts are provided by aspartate 232, aspartate 256, and aspartate 260. Residue arginine 312 is part of the active site.

It belongs to the polysaccharide lyase 1 family. The cofactor is Ca(2+).

The catalysed reaction is Eliminative cleavage of (1-&gt;4)-alpha-D-galacturonan to give oligosaccharides with 4-deoxy-alpha-D-galact-4-enuronosyl groups at their non-reducing ends.. It functions in the pathway glycan metabolism; pectin degradation; 2-dehydro-3-deoxy-D-gluconate from pectin: step 2/5. The chain is Pectate lyase from Lilium longiflorum (Trumpet lily).